A 124-amino-acid polypeptide reads, in one-letter code: Sulfiredoxin (124 aa).

The protein belongs to the sulfiredoxin family. As to quaternary structure, interacts with tpx1 in response to oxidative stress.

The protein localises to the cytoplasm. It is found in the nucleus. The enzyme catalyses S-hydroxy-S-oxy-L-cysteinyl-[peroxiredoxin] + [protein]-dithiol + ATP = S-hydroxy-L-cysteinyl-[peroxiredoxin] + [protein]-disulfide + ADP + phosphate. Functionally, contributes to oxidative stress resistance by reducing cysteine-sulfinic acid formed under exposure to oxidants in a peroxiredoxin. May catalyze the reduction in a multi-step process by acting both as a specific phosphotransferase and a thioltransferase. The sequence is that of Sulfiredoxin (srx1) from Schizosaccharomyces pombe (strain 972 / ATCC 24843) (Fission yeast).